A 62-amino-acid polypeptide reads, in one-letter code: Large ribosomal subunit protein uL30 (62 aa).

The protein belongs to the universal ribosomal protein uL30 family. In terms of assembly, part of the 50S ribosomal subunit.

This chain is Large ribosomal subunit protein uL30, found in Heliobacterium modesticaldum (strain ATCC 51547 / Ice1).